Consider the following 341-residue polypeptide: UDP-3-O-acylglucosamine N-acyltransferase (341 aa).

Residue H239 is the Proton acceptor of the active site.

It belongs to the transferase hexapeptide repeat family. LpxD subfamily. As to quaternary structure, homotrimer.

The catalysed reaction is a UDP-3-O-[(3R)-3-hydroxyacyl]-alpha-D-glucosamine + a (3R)-hydroxyacyl-[ACP] = a UDP-2-N,3-O-bis[(3R)-3-hydroxyacyl]-alpha-D-glucosamine + holo-[ACP] + H(+). Its pathway is bacterial outer membrane biogenesis; LPS lipid A biosynthesis. Its function is as follows. Catalyzes the N-acylation of UDP-3-O-acylglucosamine using 3-hydroxyacyl-ACP as the acyl donor. Is involved in the biosynthesis of lipid A, a phosphorylated glycolipid that anchors the lipopolysaccharide to the outer membrane of the cell. This is UDP-3-O-acylglucosamine N-acyltransferase from Shewanella oneidensis (strain ATCC 700550 / JCM 31522 / CIP 106686 / LMG 19005 / NCIMB 14063 / MR-1).